A 385-amino-acid chain; its full sequence is MEDALGQLAVLVLEDGTRFHGRSIGAKGTTVGEVVFNTSITGYQEIITDPSYSHQIVTLTHPHIGNIGTNCNDEESSKIHIRGLIIRDMSPISSNYRSEKSFSSYLKENNIVAISDIDTRKLTRILRTKGSQNGCIIEDKKENYSVAYQKAKKFLSLQGLDLAKKVSTKFIYNWDKGSFFINKSKSKLEKKKKFLFHIVVYDFGVKRNILRMLVDRGCYLTVVPAKTDPKIALNLNPDGIFLSNGPGDPRPCDYAIHAIQCFLKKNIPIFGICLGHQLLALASGANIIKMKFGHHGGNHPVKEIKTNRVIITSQNHSFTVDAKNMPNNIAITHSSLFDGTLQGLCLTDKLAFSFQGHPEASPGPHDASSLFDHFIKLLNQVKFSN.

Positions methionine 1 to phenylalanine 196 are CPSase. L-glutamine is bound by residues serine 51, glycine 245, and glycine 247. A Glutamine amidotransferase type-1 domain is found at histidine 197 to serine 384. Catalysis depends on cysteine 273, which acts as the Nucleophile. Positions 274, 277, 315, and 318 each coordinate L-glutamine. Catalysis depends on residues histidine 357 and glutamate 359.

This sequence belongs to the CarA family. In terms of assembly, composed of two chains; the small (or glutamine) chain promotes the hydrolysis of glutamine to ammonia, which is used by the large (or ammonia) chain to synthesize carbamoyl phosphate. Tetramer of heterodimers (alpha,beta)4.

It catalyses the reaction hydrogencarbonate + L-glutamine + 2 ATP + H2O = carbamoyl phosphate + L-glutamate + 2 ADP + phosphate + 2 H(+). It carries out the reaction L-glutamine + H2O = L-glutamate + NH4(+). Its pathway is amino-acid biosynthesis; L-arginine biosynthesis; carbamoyl phosphate from bicarbonate: step 1/1. The protein operates within pyrimidine metabolism; UMP biosynthesis via de novo pathway; (S)-dihydroorotate from bicarbonate: step 1/3. Functionally, small subunit of the glutamine-dependent carbamoyl phosphate synthetase (CPSase). CPSase catalyzes the formation of carbamoyl phosphate from the ammonia moiety of glutamine, carbonate, and phosphate donated by ATP, constituting the first step of 2 biosynthetic pathways, one leading to arginine and/or urea and the other to pyrimidine nucleotides. The small subunit (glutamine amidotransferase) binds and cleaves glutamine to supply the large subunit with the substrate ammonia. This Buchnera aphidicola subsp. Schizaphis graminum (strain Sg) protein is Carbamoyl phosphate synthase small chain.